The sequence spans 79 residues: Small ribosomal subunit protein bS18B (79 aa).

Belongs to the bacterial ribosomal protein bS18 family. Part of the 30S ribosomal subunit. Forms a tight heterodimer with protein bS6.

Its function is as follows. Binds as a heterodimer with protein bS6 to the central domain of the 16S rRNA, where it helps stabilize the platform of the 30S subunit. This chain is Small ribosomal subunit protein bS18B, found in Mycolicibacterium gilvum (strain PYR-GCK) (Mycobacterium gilvum (strain PYR-GCK)).